The primary structure comprises 78 residues: Large ribosomal subunit protein bL28 (78 aa).

Positions 1–22 are disordered; the sequence is MSRVCQVTGKRPMSGNNRSHAM.

The protein belongs to the bacterial ribosomal protein bL28 family.

In Yersinia pseudotuberculosis serotype O:1b (strain IP 31758), this protein is Large ribosomal subunit protein bL28.